We begin with the raw amino-acid sequence, 55 residues long: ATP synthase protein 8 (55 aa).

A helical transmembrane segment spans residues 7-28 (ISWFFNFLLAWFFLFIVVTILL).

The protein belongs to the ATPase protein 8 family. F-type ATPases have 2 components, CF(1) - the catalytic core - and CF(0) - the membrane proton channel.

Its subcellular location is the mitochondrion membrane. Mitochondrial membrane ATP synthase (F(1)F(0) ATP synthase or Complex V) produces ATP from ADP in the presence of a proton gradient across the membrane which is generated by electron transport complexes of the respiratory chain. F-type ATPases consist of two structural domains, F(1) - containing the extramembraneous catalytic core and F(0) - containing the membrane proton channel, linked together by a central stalk and a peripheral stalk. During catalysis, ATP synthesis in the catalytic domain of F(1) is coupled via a rotary mechanism of the central stalk subunits to proton translocation. Part of the complex F(0) domain. Minor subunit located with subunit a in the membrane. This Pisaster ochraceus (Ochre sea star) protein is ATP synthase protein 8 (MT-ATP8).